We begin with the raw amino-acid sequence, 502 residues long: Xylan O-acetyltransferase 13 (502 aa).

At 1 to 53 (MWSALFSHLREVHKRSGVKEEKLIMKSPPAAGEAGCHKPQATATNKMTVLQSP) the chain is on the cytoplasmic side. A helical; Signal-anchor for type II membrane protein transmembrane segment spans residues 54–76 (LGLRTILTSLVAFFIVVSSVSLL). The Lumenal portion of the chain corresponds to 77-502 (FDRGQDAQAQ…EFLYAYIMHK (426 aa)). 4 cysteine pairs are disulfide-bonded: Cys-152-Cys-203, Cys-174-Cys-239, Cys-183-Cys-483, and Cys-399-Cys-479. Asn-153, Asn-163, Asn-189, and Asn-209 each carry an N-linked (GlcNAc...) asparagine glycan. The short motif at 226-228 (GDS) is the GDS motif element. Ser-228 functions as the Nucleophile in the catalytic mechanism. N-linked (GlcNAc...) asparagine glycans are attached at residues Asn-255, Asn-267, Asn-372, Asn-401, and Asn-442. Residue Asp-478 is the Proton donor of the active site. The DXXH motif motif lies at 478 to 481 (DCTH). His-481 serves as the catalytic Proton acceptor.

Belongs to the PC-esterase family. TBL subfamily.

It localises to the golgi apparatus membrane. Functionally, xylan acetyltransferase required for 2-O- and 3-O-monoacetylation of xylosyl residues in xylan. Catalyzes the 2-O-acetylation of xylan, followed by nonenzymatic acetyl migration to the O-3 position, resulting in products that are monoacetylated at both O-2 and O-3 positions. This is Xylan O-acetyltransferase 13 from Oryza sativa subsp. japonica (Rice).